The primary structure comprises 212 residues: Large ribosomal subunit protein uL1 (212 aa).

Belongs to the universal ribosomal protein uL1 family. As to quaternary structure, part of the 50S ribosomal subunit.

Binds directly to 23S rRNA. Probably involved in E site tRNA release. Functionally, protein L1 is also a translational repressor protein, it controls the translation of its operon by binding to its mRNA. The polypeptide is Large ribosomal subunit protein uL1 (Methanothrix thermoacetophila (strain DSM 6194 / JCM 14653 / NBRC 101360 / PT) (Methanosaeta thermophila)).